Here is a 1380-residue protein sequence, read N- to C-terminus: DNA-directed RNA polymerase subunit beta (1380 aa).

The protein belongs to the RNA polymerase beta chain family. The RNAP catalytic core consists of 2 alpha, 1 beta, 1 beta' and 1 omega subunit. When a sigma factor is associated with the core the holoenzyme is formed, which can initiate transcription.

It catalyses the reaction RNA(n) + a ribonucleoside 5'-triphosphate = RNA(n+1) + diphosphate. Its function is as follows. DNA-dependent RNA polymerase catalyzes the transcription of DNA into RNA using the four ribonucleoside triphosphates as substrates. This chain is DNA-directed RNA polymerase subunit beta, found in Ehrlichia canis (strain Jake).